A 150-amino-acid chain; its full sequence is Ribosome maturation factor RimP (150 aa).

Belongs to the RimP family.

Its subcellular location is the cytoplasm. Required for maturation of 30S ribosomal subunits. The chain is Ribosome maturation factor RimP from Thermotoga neapolitana (strain ATCC 49049 / DSM 4359 / NBRC 107923 / NS-E).